Here is a 630-residue protein sequence, read N- to C-terminus: Peptidyl-prolyl cis-trans isomerase cyp15 (630 aa).

Residues 1–46 (MPEDSNTNDNNKRPLEDNNAVDGESDDDIGPMLPPPPGEDAPRKKK) form a disordered region. 5 WD repeats span residues 70–108 (MHRD…IEFV), 113–152 (SHLS…MINM), 157–198 (YKPK…KPLH), 203–242 (MHSK…ALPD), and 258–301 (RKKK…REYD). A PPIase cyclophilin-type domain is found at 475 to 629 (LGTSAIIRTT…DDIKIINIDI (155 aa)).

It belongs to the cyclophilin-type PPIase family.

It carries out the reaction [protein]-peptidylproline (omega=180) = [protein]-peptidylproline (omega=0). Its function is as follows. PPIases accelerate the folding of proteins. It catalyzes the cis-trans isomerization of proline imidic peptide bonds in oligopeptides. The polypeptide is Peptidyl-prolyl cis-trans isomerase cyp15 (cyp15) (Rhizopus delemar (strain RA 99-880 / ATCC MYA-4621 / FGSC 9543 / NRRL 43880) (Mucormycosis agent)).